The primary structure comprises 541 residues: Chaperonin GroEL 2 (541 aa).

ATP is bound by residues 29-32 (TLGP), 86-90 (DGTTT), Gly413, 477-479 (NAA), and Asp493.

The protein belongs to the chaperonin (HSP60) family. Forms a cylinder of 14 subunits composed of two heptameric rings stacked back-to-back. Interacts with the co-chaperonin GroES.

It localises to the cytoplasm. It catalyses the reaction ATP + H2O + a folded polypeptide = ADP + phosphate + an unfolded polypeptide.. In terms of biological role, together with its co-chaperonin GroES, plays an essential role in assisting protein folding. The GroEL-GroES system forms a nano-cage that allows encapsulation of the non-native substrate proteins and provides a physical environment optimized to promote and accelerate protein folding. The protein is Chaperonin GroEL 2 of Nocardioides sp. (strain ATCC BAA-499 / JS614).